The primary structure comprises 625 residues: Phosphomethylpyrimidine synthase (625 aa).

Substrate contacts are provided by residues N230, M259, Y288, H324, 344–346 (SRG), 385–388 (DGLR), and E424. Zn(2+) is bound at residue H428. Y451 lines the substrate pocket. H492 is a binding site for Zn(2+). 3 residues coordinate [4Fe-4S] cluster: C572, C575, and C580.

The protein belongs to the ThiC family. Homodimer. It depends on [4Fe-4S] cluster as a cofactor.

It carries out the reaction 5-amino-1-(5-phospho-beta-D-ribosyl)imidazole + S-adenosyl-L-methionine = 4-amino-2-methyl-5-(phosphooxymethyl)pyrimidine + CO + 5'-deoxyadenosine + formate + L-methionine + 3 H(+). Its pathway is cofactor biosynthesis; thiamine diphosphate biosynthesis. In terms of biological role, catalyzes the synthesis of the hydroxymethylpyrimidine phosphate (HMP-P) moiety of thiamine from aminoimidazole ribotide (AIR) in a radical S-adenosyl-L-methionine (SAM)-dependent reaction. This is Phosphomethylpyrimidine synthase from Xanthomonas euvesicatoria pv. vesicatoria (strain 85-10) (Xanthomonas campestris pv. vesicatoria).